Here is a 130-residue protein sequence, read N- to C-terminus: MAGREGRTRQRTLRDTIPDCALRSQTLESLDARYVSRDGAHDAAVWFEDMTPAELEVVFPTTDAKLNYLSRTQRLASLLTYAGPIKAPDDAAAPQTPDTACVHGELLAAKRERFAAVINRFLDLHQILRG.

The protein belongs to the herpesviridae TRM2 protein family. As to quaternary structure, associates with TRM1 and TRM3 to form the tripartite terminase complex.

It localises to the host nucleus. Its function is as follows. Component of the molecular motor that translocates viral genomic DNA in empty capsid during DNA packaging. Forms a tripartite terminase complex together with TRM1 and TRM3 in the host cytoplasm. Once the complex reaches the host nucleus, it interacts with the capsid portal vertex. This portal forms a ring in which genomic DNA is translocated into the capsid. The polypeptide is Tripartite terminase subunit 2 (Homo sapiens (Human)).